The chain runs to 505 residues: Alpha-1-syntrophin (505 aa).

2 disordered regions span residues 1 to 24 (MASGRRAPRTGLLELRAGTGAGAG) and 40 to 75 (LTVSPADGEPGPEPGAVREPEPAQINGAAEPGAAPP). PH domains are found at residues 6–269 (RAPR…AQIN) and 293–401 (DIKQ…DGCH). A compositionally biased stretch (low complexity) spans 9 to 18 (RTGLLELRAG). In terms of domain architecture, PDZ spans 87–170 (RVTVRKADAG…EVVLEVKYMK (84 aa)). Ser-101, Ser-184, Ser-189, Ser-193, and Ser-200 each carry phosphoserine. Positions 183 to 212 (TSVGWDSPPASPLQRQPSSPGPQTRNLSEA) are disordered. Residues 195–209 (LQRQPSSPGPQTRNL) show a composition bias toward polar residues. The 57-residue stretch at 449–505 (PFEKLQMSSDDGASLLFLDFGGAEGEIQLDLHSCPKTMVFIIHSFLSAKVTRLGLLA) folds into the SU domain. Positions 483–505 (PKTMVFIIHSFLSAKVTRLGLLA) are calmodulin-binding.

It belongs to the syntrophin family. As to quaternary structure, monomer and homodimer. Interacts with the dystrophin related protein DTNA; SGCG of the dystrophin glycoprotein complex; NOS1; GRB2; GA; TGFA; MAPK12 and the sodium channel proteins SCN4A and SCN5A. Interacts with the dystrophin protein DMD in a calmodulin dependent manner and with related protein UTRN; SGCA of the dystrophin glycoprotein complex; F-actin; calmodulin and with the other members of the syntrophin family SNTB1 and SNTB2. Interacts with MYOC; regulates muscle hypertrophy. Interacts with DTNB. In terms of processing, phosphorylated by CaM-kinase II. Phosphorylation may inhibit the interaction with DMD. In terms of tissue distribution, highly expressed in skeletal and cardiac muscle and is also detected in brain.

Its subcellular location is the cell membrane. It localises to the sarcolemma. It is found in the cell junction. The protein localises to the cytoplasm. The protein resides in the cytoskeleton. Functionally, adapter protein that binds to and probably organizes the subcellular localization of a variety of membrane proteins. May link various receptors to the actin cytoskeleton and the extracellular matrix via dystrophin glycoprotein complex. Plays an important role in synapse formation and in the organization of UTRN and acetylcholine receptors at the neuromuscular synapse. Binds to phosphatidylinositol 4,5-bisphosphate. The sequence is that of Alpha-1-syntrophin (SNTA1) from Oryctolagus cuniculus (Rabbit).